Consider the following 164-residue polypeptide: Phosphopantetheine adenylyltransferase (164 aa).

Thr-9 contributes to the substrate binding site. Residues 9–10 (TF) and His-17 contribute to the ATP site. Lys-41, Thr-76, and Arg-90 together coordinate substrate. Residues 91–93 (GLR), Glu-101, and 126–132 (YQFVSSS) contribute to the ATP site.

Belongs to the bacterial CoaD family. As to quaternary structure, homohexamer. Mg(2+) serves as cofactor.

The protein resides in the cytoplasm. It catalyses the reaction (R)-4'-phosphopantetheine + ATP + H(+) = 3'-dephospho-CoA + diphosphate. It participates in cofactor biosynthesis; coenzyme A biosynthesis; CoA from (R)-pantothenate: step 4/5. Its function is as follows. Reversibly transfers an adenylyl group from ATP to 4'-phosphopantetheine, yielding dephospho-CoA (dPCoA) and pyrophosphate. This Coprothermobacter proteolyticus (strain ATCC 35245 / DSM 5265 / OCM 4 / BT) protein is Phosphopantetheine adenylyltransferase.